We begin with the raw amino-acid sequence, 121 residues long: Large ribosomal subunit protein bL19 (121 aa).

Belongs to the bacterial ribosomal protein bL19 family.

Functionally, this protein is located at the 30S-50S ribosomal subunit interface and may play a role in the structure and function of the aminoacyl-tRNA binding site. This chain is Large ribosomal subunit protein bL19 (rplS), found in Chlamydia muridarum (strain MoPn / Nigg).